The primary structure comprises 408 residues: MKQSALFEADDVEAISIDDVAFSLNVSSASVRNWIKTGYLHKATKNSVTAESFVAFKDEILGTEKLNQRANKSLKDQHDHSGLEEMIHNIIRSNEVHPEGLSDIYEESLSESYKNKEGVFYTPKEIAADFFDYLPKDCSELTFCDPCCGTGNFLIEAVKRGFKPCNIYGYDIDEVALEISRSRLKELCGVAESNIEKRDFLSASYQIEQKYDVIFTNPPWGKKLPKKDKDSLADSLATGNSKDTSAIFFFASMKILNSSGYLGFLLQDAFFNIASYESVRKAALANQIVALIDFGKPFKGLLTKAKGIILRKQCPDDQHATICVSGNTKNEVSQRVFEKNPKSIFNFTCSELDLEVVEHILSIPHKTLRGSARWGLGIVTGNNKKFCLPEARGGYIPVYKGSDITRKG.

It belongs to the N(4)/N(6)-methyltransferase family.

The catalysed reaction is a 2'-deoxyadenosine in DNA + S-adenosyl-L-methionine = an N(6)-methyl-2'-deoxyadenosine in DNA + S-adenosyl-L-homocysteine + H(+). Functionally, a gamma subtype methylase, recognizes the double-stranded sequence 5'-ATTAAT-3', methylates A-5 on both strands, and protects the DNA from cleavage by the VspI endonuclease. This is Type II methyltransferase M.VspI from Vibrio sp. (strain 343).